The sequence spans 187 residues: Benzene 1,2-dioxygenase subunit beta (187 aa).

It belongs to the bacterial ring-hydroxylating dioxygenase beta subunit family. In terms of assembly, this dioxygenase system consists of four proteins: the two subunits of the hydroxylase component (BnzA and BnzB), a ferredoxin (BnzC) and a ferredoxin reductase (BnzD). It depends on [2Fe-2S] cluster as a cofactor. The cofactor is Fe cation.

The enzyme catalyses benzene + NADH + O2 + H(+) = cis-1,2-dihydrobenzene-1,2-diol + NAD(+). It catalyses the reaction toluene + NADH + O2 + H(+) = (1S,2R)-3-methylcyclohexa-3,5-diene-1,2-diol + NAD(+). Its pathway is aromatic compound metabolism; benzene degradation; catechol from benzene: step 1/2. The protein operates within xenobiotic degradation; toluene degradation. It functions in the pathway xenobiotic degradation; xylene degradation. Its function is as follows. Catalyzes both the oxidation of benzene and toluene. The beta subunit may be responsible for the substrate specificity of the enzyme. This Pseudomonas putida (strain ATCC 700007 / DSM 6899 / JCM 31910 / BCRC 17059 / LMG 24140 / F1) protein is Benzene 1,2-dioxygenase subunit beta (bnzB).